The following is a 651-amino-acid chain: Protein EXECUTER 2, chloroplastic (651 aa).

Residues 1-69 (MATTQPCLIG…KAPSLSCLRN (69 aa)) constitute a chloroplast transit peptide. Residues 103–138 (ESVVSLLKSQLEDAVEKEDFEEAVKLKQAISEATVD) enclose the UVR domain. Positions 330–359 (DATEELVGEGTEETNSSDDEEEVEEEENDS) are disordered.

It localises to the plastid. The protein resides in the chloroplast. Together with EX1, enables higher plants to perceive singlet oxygen as a stress signal in plastid that activates a genetically determined nuclear stress response program which triggers a programmed cell death (PCD). This transfer of singlet oxygen-induced stress-related signals from the plastid to the nucleus that triggers genetically controlled PCD pathway is unique to photosynthetic eukaryotes and operates under mild stress conditions, impeding photosystem II (PSII) without causing photooxidative damage of the plant. This chain is Protein EXECUTER 2, chloroplastic, found in Arabidopsis thaliana (Mouse-ear cress).